Reading from the N-terminus, the 1238-residue chain is ATP-dependent helicase/nuclease subunit A (1238 aa).

The 479-residue stretch at 12–490 (VSWTDDQWKA…IDLNANFRSR (479 aa)) folds into the UvrD-like helicase ATP-binding domain. 33–40 (AAAGSGKT) serves as a coordination point for ATP. One can recognise a UvrD-like helicase C-terminal domain in the interval 510 to 818 (GEILYDDNAS…RLVTIHSSKG (309 aa)).

It belongs to the helicase family. AddA subfamily. Heterodimer of AddA and AddB/RexB. The cofactor is Mg(2+).

The catalysed reaction is Couples ATP hydrolysis with the unwinding of duplex DNA by translocating in the 3'-5' direction.. It carries out the reaction ATP + H2O = ADP + phosphate + H(+). In terms of biological role, the heterodimer acts as both an ATP-dependent DNA helicase and an ATP-dependent, dual-direction single-stranded exonuclease. Recognizes the chi site generating a DNA molecule suitable for the initiation of homologous recombination. The AddA nuclease domain is required for chi fragment generation; this subunit has the helicase and 3' -&gt; 5' nuclease activities. This chain is ATP-dependent helicase/nuclease subunit A, found in Lysinibacillus sphaericus (strain C3-41).